Consider the following 271-residue polypeptide: Bifunctional protein FolD (271 aa).

NADP(+)-binding positions include 154–156, serine 181, and isoleucine 222; that span reads GRS.

This sequence belongs to the tetrahydrofolate dehydrogenase/cyclohydrolase family. In terms of assembly, homodimer.

The enzyme catalyses (6R)-5,10-methylene-5,6,7,8-tetrahydrofolate + NADP(+) = (6R)-5,10-methenyltetrahydrofolate + NADPH. It carries out the reaction (6R)-5,10-methenyltetrahydrofolate + H2O = (6R)-10-formyltetrahydrofolate + H(+). Its pathway is one-carbon metabolism; tetrahydrofolate interconversion. Functionally, catalyzes the oxidation of 5,10-methylenetetrahydrofolate to 5,10-methenyltetrahydrofolate and then the hydrolysis of 5,10-methenyltetrahydrofolate to 10-formyltetrahydrofolate. The protein is Bifunctional protein FolD of Thermotoga sp. (strain RQ2).